Reading from the N-terminus, the 302-residue chain is MRHLISMRDIGRDDILRILEESEKMEAVLNEKGHSDILNGKILATLFYEPSTRTRLSFETAMKRLGGNVIGFTDISNTSVTKGESLTDTIKVISGYSDLIVIRHPSEGAARLSSEVSGVPVINAGDGSNQHPTQTLLDLYTIKREVGKIDGLKIAFIGDLKYGRTVHSLCQALSLFKNVELRLISPDELKIPREVLEYIDGKVLLSETSEINIEDVDVVYMTRIQKERFIDLNEYQKVKGTYRLLKEHVLEKNLIIMHPLPRVDEIDSKVDSLNQAKYFKQSFYGVPVRMAILSLLSKDLQK.

The carbamoyl phosphate site is built by Arg-53 and Thr-54. Lys-82 lines the L-aspartate pocket. Residues Arg-103, His-131, and Gln-134 each coordinate carbamoyl phosphate. The L-aspartate site is built by Arg-164 and Arg-223. Carbamoyl phosphate is bound by residues Leu-260 and Pro-261.

It belongs to the aspartate/ornithine carbamoyltransferase superfamily. ATCase family. Heterooligomer of catalytic and regulatory chains.

The enzyme catalyses carbamoyl phosphate + L-aspartate = N-carbamoyl-L-aspartate + phosphate + H(+). Its pathway is pyrimidine metabolism; UMP biosynthesis via de novo pathway; (S)-dihydroorotate from bicarbonate: step 2/3. In terms of biological role, catalyzes the condensation of carbamoyl phosphate and aspartate to form carbamoyl aspartate and inorganic phosphate, the committed step in the de novo pyrimidine nucleotide biosynthesis pathway. In Methanococcus vannielii (strain ATCC 35089 / DSM 1224 / JCM 13029 / OCM 148 / SB), this protein is Aspartate carbamoyltransferase catalytic subunit.